Reading from the N-terminus, the 318-residue chain is Ubiquinol oxidase (318 aa).

A helical membrane pass occupies residues 150–170 (VVVLETVAAIPGMVGGMFRHL). Fe cation contacts are provided by E154, E193, and H196. A helical membrane pass occupies residues 212 to 232 (MLIKLGQFLFFNGYMVFYFVA). Positions 244, 295, and 298 each coordinate Fe cation.

This sequence belongs to the alternative oxidase family. In terms of assembly, found as monomers and homodimers. Fe cation is required as a cofactor.

Its subcellular location is the mitosome membrane. It catalyses the reaction 2 a ubiquinol + O2 = 2 a ubiquinone + 2 H2O. Alternative oxidase which function may be to reoxidize reducing equivalents produced by glycolysis such as ubiquinol. This Trachipleistophora hominis (Microsporidian parasite) protein is Ubiquinol oxidase (AOX).